We begin with the raw amino-acid sequence, 210 residues long: Type III pantothenate kinase (210 aa).

5 to 12 (DIGNTYLH) contacts ATP. Residues tyrosine 69 and 73–76 (GVDR) each bind substrate. Aspartate 75 functions as the Proton acceptor in the catalytic mechanism. Residue aspartate 90 participates in K(+) binding. Residue serine 93 coordinates ATP. Substrate is bound at residue threonine 145.

Belongs to the type III pantothenate kinase family. In terms of assembly, homodimer. It depends on NH4(+) as a cofactor. K(+) is required as a cofactor.

It localises to the cytoplasm. The enzyme catalyses (R)-pantothenate + ATP = (R)-4'-phosphopantothenate + ADP + H(+). It functions in the pathway cofactor biosynthesis; coenzyme A biosynthesis; CoA from (R)-pantothenate: step 1/5. In terms of biological role, catalyzes the phosphorylation of pantothenate (Pan), the first step in CoA biosynthesis. The sequence is that of Type III pantothenate kinase from Wolinella succinogenes (strain ATCC 29543 / DSM 1740 / CCUG 13145 / JCM 31913 / LMG 7466 / NCTC 11488 / FDC 602W) (Vibrio succinogenes).